Consider the following 105-residue polypeptide: Malonate decarboxylase acyl carrier protein (105 aa).

Serine 28 is modified (O-(phosphoribosyl dephospho-coenzyme A)serine).

It belongs to the MdcC family. Post-translationally, covalently binds the prosthetic group of malonate decarboxylase.

It is found in the cytoplasm. Its function is as follows. Subunit of malonate decarboxylase, it is an acyl carrier protein to which acetyl and malonyl thioester residues are bound via a 2'-(5''-phosphoribosyl)-3'-dephospho-CoA prosthetic group and turn over during the catalytic mechanism. This chain is Malonate decarboxylase acyl carrier protein, found in Xanthomonas euvesicatoria pv. vesicatoria (strain 85-10) (Xanthomonas campestris pv. vesicatoria).